The primary structure comprises 364 residues: G-protein coupled receptor 4 (364 aa).

The Extracellular segment spans residues 1–8; it reads MCNVSQDS. A glycan (N-linked (GlcNAc...) asparagine) is linked at Asn3. The chain crosses the membrane as a helical span at residues 9-45; sequence CNIDSRLDSLFPPTLYIFVMVIGFPTNCLSLWAAFVQ. 2 disulfides stabilise this stretch: Cys9/Cys258 and Cys90/Cys168. The Cytoplasmic segment spans residues 46-49; the sequence is VRQK. The helical transmembrane segment at 50–80 threads the bilayer; it reads NELGVYLLNLSISDLLYIATLPPWVNYFLHQ. At 81-85 the chain is on the extracellular side; it reads DNWIH. Residues 86–121 traverse the membrane as a helical segment; it reads GPESCKLFGFILYTNIYISIGFLSCISVDRYLAVAH. Topologically, residues 122–129 are cytoplasmic; the sequence is PLKFAKVR. A helical membrane pass occupies residues 130 to 156; that stretch reads RVKTAAVVSAVVWAIEIGANSAPLFHN. Residues 157 to 172 lie on the Extracellular side of the membrane; sequence ELFEDRFNHTFCFEKY. Residues 157–172 are extracellular loop 2 (ECL2); it reads ELFEDRFNHTFCFEKY. Residue Asn164 is glycosylated (N-linked (GlcNAc...) asparagine). A helical membrane pass occupies residues 173 to 210; that stretch reads PMEDWVAQMNLYRVFVGFLFPWVLMLFCYQGILRAVKT. Topologically, residues 211–214 are cytoplasmic; the sequence is NVST. A helical membrane pass occupies residues 215–250; it reads EREEKAKIKRLALSLIAILLFCFAPYHLILLSRSVV. Over 251 to 260 the chain is Extracellular; the sequence is YLGQPCDCTF. The helical transmembrane segment at 261–289 threads the bilayer; the sequence is EENIFTAYHVSLALTSLNCVADPILYCLA. The Cytoplasmic segment spans residues 290 to 364; that stretch reads NEGARSEVTR…RVRRRRDCKC (75 aa).

This sequence belongs to the G-protein coupled receptor 1 family.

The protein resides in the cell membrane. Its activity is regulated as follows. Activated by a network of residues that connects an extracellular-facing cavity to Glu-145, a conserved charged residue buried in the transmembrane core of the receptor. Protonation likely drives conformational changes in extracellular loop 2 (ECL2), which stabilizes movement of transmembrane 3 (TM3) and a series of rearrangements that connect the extracellular-facing cavity to Glu-145, a residue only conserved in proton-sensing G-protein coupled receptors. Its function is as follows. Proton-sensing G-protein coupled receptor activated by extracellular pH, which is required to monitor pH changes and generate adaptive reactions. Ligand binding causes a conformation change that triggers signaling via guanine nucleotide-binding proteins (G proteins) and modulates the activity of downstream effectors, such as adenylate cyclase. The sequence is that of G-protein coupled receptor 4 from Callorhinchus milii (Ghost shark).